The sequence spans 688 residues: T-box transcription factor TBX2-A (688 aa).

The segment at residues 104-277 (LWDQFHKIGT…NNPFAKGFRD (174 aa)) is a DNA-binding region (T-box). Disordered regions lie at residues 301–436 (CKAD…GSLS) and 606–688 (PSTN…ETPK). Basic and acidic residues-rich tracts occupy residues 340–361 (NNRE…EIRS), 378–403 (RLED…KDGS), and 412–430 (SLEK…KSDP). Low complexity predominate over residues 621 to 636 (PGSESSKPGSSRESSP). Residues 655-679 (ASMKDSINELQNIQRLVSGLESQRE) adopt a coiled-coil conformation. Over residues 676 to 688 (SQREISPGRETPK) the composition is skewed to basic and acidic residues.

Binds DNA as a monomer.

The protein localises to the nucleus. Transcription factor which acts as a transcriptional repressor. May also function as a transcriptional activator. Binds to the palindromic T site 5'-TTCACACCTAGGTGTGAA-3' DNA sequence, or a half-site, which are present in the regulatory region of several genes. In Xenopus laevis (African clawed frog), this protein is T-box transcription factor TBX2-A (tbx2-a).